The sequence spans 126 residues: Large ribosomal subunit protein bL12 (126 aa).

The disordered stretch occupies residues 97-126 (PQPVKSGVSKEEAEEAKKQLAESGAEVEVK). The span at 104–116 (VSKEEAEEAKKQL) shows a compositional bias: basic and acidic residues.

The protein belongs to the bacterial ribosomal protein bL12 family. As to quaternary structure, homodimer. Part of the ribosomal stalk of the 50S ribosomal subunit. Forms a multimeric L10(L12)X complex, where L10 forms an elongated spine to which 2 to 4 L12 dimers bind in a sequential fashion. Binds GTP-bound translation factors.

Functionally, forms part of the ribosomal stalk which helps the ribosome interact with GTP-bound translation factors. Is thus essential for accurate translation. The chain is Large ribosomal subunit protein bL12 from Geotalea uraniireducens (strain Rf4) (Geobacter uraniireducens).